We begin with the raw amino-acid sequence, 551 residues long: Transcription factor 7-like 1-B (551 aa).

The segment covering 1 to 11 (MPQLNSGGGDE) has biased composition (gly residues). The tract at residues 1–61 (MPQLNSGGGD…SENHSSDSDS (61 aa)) is interaction with CTNNB1-A. 4 disordered regions span residues 1 to 77 (MPQL…EKPR), 183 to 213 (GTPP…PYYP), 391 to 474 (WSAR…SLTT), and 492 to 515 (SPSS…SRPI). Basic and acidic residues-rich tracts occupy residues 17–32 (ELIR…EKSP) and 52–77 (SENH…EKPR). Residues 109-312 (LGGHYLPNGA…SPNLSTKSNV (204 aa)) are interaction with AES and TLE4-A. The HMG box DNA-binding region spans 324 to 392 (IKKPLNAFML…LHSQLYPSWS (69 aa)). A compositionally biased stretch (basic and acidic residues) spans 407–416 (KQSPEMENYT). The tract at residues 408-551 (QSPEMENYTK…PLSLVTRSSD (144 aa)) is interaction with CTBP-B. Residues 445 to 464 (SPATPSAALASPAAPAATHS) show a composition bias toward low complexity. The segment covering 465–474 (EQAQPLSLTT) has biased composition (polar residues).

The protein belongs to the TCF/LEF family. In terms of assembly, interacts with csnk1e, ctnnb1-A, ctbp-B, dact1-A and gsk3b. May interact with ase and tle4-A. Interacts with tle1-B. In terms of processing, phosphorylated. Phosphorylation by csnk1e promotes binding to ctnnb1-A while phosphorylation by gsk3b may reverse this effect.

The protein localises to the nucleus. Participates in the Wnt signaling pathway. Binds to DNA and acts as a repressor in the absence of ctnnb1-A and possibly ctnnb1-B, and as an activator in the presence of these proteins. Required early in development for the establishment of the dorsal body axis in response to maternal Wnt signaling. This Xenopus laevis (African clawed frog) protein is Transcription factor 7-like 1-B (tcf7l1-b).